Reading from the N-terminus, the 275-residue chain is Gap junction gamma-3 protein (275 aa).

The Cytoplasmic segment spans residues 1–22; sequence MCGSFLRRVAAEESRHPTPVGR. A helical transmembrane segment spans residues 23 to 43; that stretch reads LLLPALLGLRLVLLAAGGTGV. Residues 44–77 are Extracellular-facing; sequence FGGGEEQSEFVCHTQQAGCKAVCYDAFHPLSPLR. Residues 78–98 traverse the membrane as a helical segment; sequence FWAFQVTLVAVPSALYMGFIL. The Cytoplasmic portion of the chain corresponds to 99-134; that stretch reads YHVIWHWEASEKVKTEEETLSQGEKGGEASRAGSSR. A helical membrane pass occupies residues 135–155; that stretch reads LLWAYVAQLGVRLALEGAALG. The Extracellular portion of the chain corresponds to 156–196; the sequence is GQYHLYGFRMPSSFVCRLEPCLGSTNCYLSRPSEKSIFLKT. The helical transmembrane segment at 197–217 threads the bilayer; the sequence is MFGVTGLCLLFTLLELVLLGL. The Cytoplasmic portion of the chain corresponds to 218–275; the sequence is GRWWRIWRHKSPSSNYSPTSQSAKRCKAPTDNFPVVEIRERPGEAGERGSEVPLSARP. Residues 254–267 show a composition bias toward basic and acidic residues; that stretch reads EIRERPGEAGERGS. The disordered stretch occupies residues 254–275; that stretch reads EIRERPGEAGERGSEVPLSARP.

The protein belongs to the connexin family. Gamma-type subfamily. A connexon is composed of a hexamer of connexins.

Its subcellular location is the cell membrane. The protein resides in the cell junction. It localises to the gap junction. One gap junction consists of a cluster of closely packed pairs of transmembrane channels, the connexons, through which materials of low MW diffuse from one cell to a neighboring cell. In Bos taurus (Bovine), this protein is Gap junction gamma-3 protein (GJC3).